Reading from the N-terminus, the 336-residue chain is Dihydroorotate dehydrogenase (quinone) (336 aa).

FMN contacts are provided by residues 62–66 (AGLDK) and T86. K66 contributes to the substrate binding site. 111-115 (NRMGF) is a binding site for substrate. FMN is bound by residues N139 and N172. N172 serves as a coordination point for substrate. The Nucleophile role is filled by S175. N177 contributes to the substrate binding site. FMN is bound by residues K217 and T245. Residue 246–247 (NT) coordinates substrate. FMN-binding positions include G268, G297, and 318–319 (YT).

Belongs to the dihydroorotate dehydrogenase family. Type 2 subfamily. Monomer. It depends on FMN as a cofactor.

Its subcellular location is the cell membrane. The enzyme catalyses (S)-dihydroorotate + a quinone = orotate + a quinol. The protein operates within pyrimidine metabolism; UMP biosynthesis via de novo pathway; orotate from (S)-dihydroorotate (quinone route): step 1/1. Catalyzes the conversion of dihydroorotate to orotate with quinone as electron acceptor. This is Dihydroorotate dehydrogenase (quinone) from Vibrio parahaemolyticus serotype O3:K6 (strain RIMD 2210633).